The chain runs to 370 residues: tRNA-specific 2-thiouridylase MnmA (370 aa).

ATP contacts are provided by residues 24–31 and Leu-50; that span reads AMSGGVDS. The active-site Nucleophile is the Cys-118. The cysteines at positions 118 and 214 are disulfide-linked. ATP is bound at residue Gly-142. An interaction with tRNA region spans residues 164-166; that stretch reads KDQ. The active-site Cysteine persulfide intermediate is Cys-214.

This sequence belongs to the MnmA/TRMU family.

It is found in the cytoplasm. It catalyses the reaction S-sulfanyl-L-cysteinyl-[protein] + uridine(34) in tRNA + AH2 + ATP = 2-thiouridine(34) in tRNA + L-cysteinyl-[protein] + A + AMP + diphosphate + H(+). In terms of biological role, catalyzes the 2-thiolation of uridine at the wobble position (U34) of tRNA, leading to the formation of s(2)U34. The polypeptide is tRNA-specific 2-thiouridylase MnmA (Ehrlichia ruminantium (strain Welgevonden)).